We begin with the raw amino-acid sequence, 583 residues long: Membrane protein insertase YidC (583 aa).

Residues 5-25 traverse the membrane as a helical segment; that stretch reads SVTGLALIALIMIVWLQFMSP. Residues 28–50 form a disordered region; that stretch reads KSVQPDNRPKAQTTATVSQEKTE. A compositionally biased stretch (polar residues) spans 37 to 46; that stretch reads KAQTTATVSQ. Helical transmembrane passes span 341–361, 362–382, 427–447, 477–497, and 515–535; these read PFAE…ISNY, GLII…LSMA, LGGC…FYVF, IPVY…TVFI, and LYIF…GLGL.

This sequence belongs to the OXA1/ALB3/YidC family. Type 1 subfamily. In terms of assembly, interacts with the Sec translocase complex via SecD. Specifically interacts with transmembrane segments of nascent integral membrane proteins during membrane integration.

The protein resides in the cell inner membrane. Its function is as follows. Required for the insertion and/or proper folding and/or complex formation of integral membrane proteins into the membrane. Involved in integration of membrane proteins that insert both dependently and independently of the Sec translocase complex, as well as at least some lipoproteins. Aids folding of multispanning membrane proteins. This Chlorobium limicola (strain DSM 245 / NBRC 103803 / 6330) protein is Membrane protein insertase YidC.